The chain runs to 281 residues: Bis(5'-nucleosyl)-tetraphosphatase, symmetrical (281 aa).

Belongs to the Ap4A hydrolase family.

It carries out the reaction P(1),P(4)-bis(5'-adenosyl) tetraphosphate + H2O = 2 ADP + 2 H(+). In terms of biological role, hydrolyzes diadenosine 5',5'''-P1,P4-tetraphosphate to yield ADP. The chain is Bis(5'-nucleosyl)-tetraphosphatase, symmetrical from Pectobacterium atrosepticum (strain SCRI 1043 / ATCC BAA-672) (Erwinia carotovora subsp. atroseptica).